Reading from the N-terminus, the 229-residue chain is NAD-dependent protein deacetylase (229 aa).

The Deacetylase sirtuin-type domain occupies 1–229; that stretch reads MNKLNEALKK…SDAVKVFEEI (229 aa). Residues alanine 20, arginine 32, glutamine 96, isoleucine 98, aspartate 99, histidine 114, threonine 181, serine 182, asparagine 205, and valine 223 each coordinate NAD(+). Positions 98 and 99 each coordinate nicotinamide. Histidine 114 serves as the catalytic Proton acceptor.

Belongs to the sirtuin family. Class U subfamily.

The protein localises to the cytoplasm. The enzyme catalyses N(6)-acetyl-L-lysyl-[protein] + NAD(+) + H2O = 2''-O-acetyl-ADP-D-ribose + nicotinamide + L-lysyl-[protein]. In terms of biological role, NAD-dependent protein deacetylase which modulates the activities of several enzymes which are inactive in their acetylated form. The sequence is that of NAD-dependent protein deacetylase from Listeria monocytogenes serovar 1/2a (strain ATCC BAA-679 / EGD-e).